We begin with the raw amino-acid sequence, 870 residues long: Radial spoke head 10 homolog B2 (870 aa).

Residues 1–16 show a composition bias toward basic and acidic residues; sequence MVKEKKKADKKGEKSA. Residues 1 to 44 form a disordered region; the sequence is MVKEKKKADKKGEKSARSPSSLSDNLDFSKQDGNTTRQEMSPAG. Residues 17–39 show a composition bias toward polar residues; that stretch reads RSPSSLSDNLDFSKQDGNTTRQE. MORN repeat units follow at residues 86–108, 109–131, 132–154, 155–177, 179–201, 204–226, 227–249, 251–273, 284–306, and 307–329; these read YEGE…GGCT, YRGM…DGLK, YEGD…DGSM, YEGE…TQPV, YIGH…QEGT, YEGD…SGNI, YEGQ…TTNE, YTGR…LKRI, YIGE…SGAM, and YDGE…NGRV. A disordered region spans residues 674-704; the sequence is NKSPSAVMSHESDAAHSDSARSSSSKLELSP. A compositionally biased stretch (basic and acidic residues) spans 683–692; that stretch reads HESDAAHSDS. Over residues 693-703 the composition is skewed to low complexity; that stretch reads ARSSSSKLELS. Positions 784–811 form a coiled coil; that stretch reads KEKIRADRLRSTAQAQQRKMEDDELEAR. Positions 840-870 are disordered; the sequence is VSSSHLILDPPKEDVTVSPSSKTITSKKKKK.

As to quaternary structure, interacts with RSPH6A. Does not appear to be part of the axonemal radial spoke complexes 1 or 2.

It localises to the cytoplasm. It is found in the cytoskeleton. Its subcellular location is the cilium axoneme. The protein localises to the cell projection. The protein resides in the cilium. It localises to the flagellum. In terms of biological role, may function as part of the axonemal radial spoke complex 3 (RS3). Radial spoke complexes are important for ciliary motility. The chain is Radial spoke head 10 homolog B2 (RSPH10B2) from Homo sapiens (Human).